The primary structure comprises 782 residues: Protein phosphatase 1 regulatory subunit 12C (782 aa).

Over residues methionine 1–alanine 17 the composition is skewed to low complexity. A disordered region spans residues methionine 1–arginine 43. An N-acetylserine modification is found at serine 2. 4 ANK repeats span residues aspartate 100–glutamine 129, glutamate 133–alanine 162, threonine 226–leucine 255, and aspartate 259–serine 288. A coiled-coil region spans residues cysteine 297–glycine 329. Residues glutamate 316–leucine 686 are disordered. A compositionally biased stretch (polar residues) spans glutamate 323–serine 337. The span at serine 349–proline 365 shows a compositional bias: basic and acidic residues. The span at glutamine 374 to proline 383 shows a compositional bias: acidic residues. Serine 399, serine 407, serine 427, serine 452, and serine 509 each carry phosphoserine. The segment covering arginine 449 to alanine 463 has biased composition (polar residues). Residues valine 537–arginine 546 are compositionally biased toward basic and acidic residues. Basic residues predominate over residues lysine 547–arginine 557. The residue at position 560 (threonine 560) is a Phosphothreonine; by CDC42BP and ROCK2. Basic and acidic residues predominate over residues aspartate 567–lysine 583. Phosphoserine occurs at positions 604 and 647. Residues proline 670–aspartate 680 are compositionally biased toward acidic residues. Positions glycine 681–lysine 782 form a coiled coil.

PP1 comprises a catalytic subunit, PPP1CA, PPP1CB or PPP1CC, and one or several targeting or regulatory subunits. PPP1R12C mediates binding to myosin. Interacts via its N-terminus with PPP1CB. Interacts with IL16. Interacts with the coiled-coil domain of MPRIP. Interacts with NOD2. In terms of processing, phosphorylation at Thr-560 is essential for its interaction with PPP1CB. In terms of tissue distribution, ubiquitously expressed. Highly expressed in heart.

It is found in the cytoplasm. The protein resides in the cytoskeleton. The protein localises to the stress fiber. Regulates myosin phosphatase activity. This Homo sapiens (Human) protein is Protein phosphatase 1 regulatory subunit 12C.